The sequence spans 360 residues: Thioredoxin domain-containing protein 15 (360 aa).

Positions 1 to 32 are cleaved as a signal peptide; sequence MVPAAGRRPPRVMRLLGWWQVLLWVLGLPVRG. Residues 33 to 321 are Extracellular-facing; the sequence is VEVAEESGRL…GPLPSTLIKS (289 aa). The interval 141-173 is disordered; it reads PDREEEYYTEPEVAESDAAPTEDSNNTESLKSP. The span at 143–155 shows a compositional bias: acidic residues; the sequence is REEEYYTEPEVAE. One can recognise a Thioredoxin domain in the interval 153–296; sequence VAESDAAPTE…LKIFIFNQTG (144 aa). Residues Asn-187, Asn-194, Asn-206, and Asn-293 are each glycosylated (N-linked (GlcNAc...) asparagine). A helical membrane pass occupies residues 322–342; that stretch reads VDWLLVFSLFFLISFIMYATI. The Cytoplasmic segment spans residues 343 to 360; sequence RTESIRWLIPGQEQEHVE.

It is found in the cell projection. Its subcellular location is the cilium membrane. Functionally, acts as a positive regulator of ciliary hedgehog signaling. Involved in ciliogenesis. The sequence is that of Thioredoxin domain-containing protein 15 (TXNDC15) from Homo sapiens (Human).